A 58-amino-acid chain; its full sequence is Proteinase inhibitor PSKP-1 (58 aa).

The 58-residue stretch at 1–58 (VIEPKCYKYEGKKCPPDINPVCGTDKRTYYNECALCVFIRQSTKKADKAIKIKKWGKC) folds into the Kazal-like domain. Disulfide bonds link C6-C36, C14-C33, and C22-C58.

Monomer. In terms of tissue distribution, skin.

The protein resides in the secreted. Functionally, has antibacterial activity against Gram-negative bacterium E.coli ATCC 11229. Shows hemagglutinating activity. Inhibits prolyl endopeptidase, but not trypsin, chymotrypsin, V8 protease and proteinase K. May have a role in mucosal defense against microbes by interacting directly with their membranes. This is Proteinase inhibitor PSKP-1 from Phyllomedusa sauvagei (Sauvage's leaf frog).